The chain runs to 426 residues: Spermidine/putrescine import ATP-binding protein PotA (426 aa).

An ABC transporter domain is found at 6–238; that stretch reads IEFKNVSKTY…PINHFVADFI (233 aa). Residue 40–47 participates in ATP binding; it reads GASGSGKS.

It belongs to the ABC transporter superfamily. Spermidine/putrescine importer (TC 3.A.1.11.1) family. In terms of assembly, the complex is composed of two ATP-binding proteins (PotA), two transmembrane proteins (PotB and PotC) and a solute-binding protein (PotD).

The protein resides in the cell membrane. The enzyme catalyses ATP + H2O + polyamine-[polyamine-binding protein]Side 1 = ADP + phosphate + polyamineSide 2 + [polyamine-binding protein]Side 1.. Its function is as follows. Part of the ABC transporter complex PotABCD involved in spermidine/putrescine import. Responsible for energy coupling to the transport system. This Lactococcus lactis subsp. cremoris (strain SK11) protein is Spermidine/putrescine import ATP-binding protein PotA.